A 735-amino-acid polypeptide reads, in one-letter code: Ribosomal protein S6 kinase alpha-1 (735 aa).

A Phosphoserine modification is found at Ser54. The region spanning 62–321 (FELLKVLGQG…AEEIKRHIFY (260 aa)) is the Protein kinase 1 domain. ATP is bound by residues 68–76 (LGQGSFGKV) and Lys94. Asp187 (proton acceptor) is an active-site residue. Ser221 is modified (phosphoserine; by PDPK1). Ser307 carries the phosphoserine modification. The region spanning 322-391 (STIDWNKLYR…VATGLMEDDS (70 aa)) is the AGC-kinase C-terminal domain. At Thr359 the chain carries Phosphothreonine. Phosphoserine is present on Ser363. Residues Ser369 and Ser380 each carry the phosphoserine; by autocatalysis modification. The 258-residue stretch at 418-675 (YIVKETIGVG…AKQVLQHPWI (258 aa)) folds into the Protein kinase 2 domain. ATP-binding positions include 424–432 (IGVGSYSVC) and Lys447. The active-site Proton acceptor is Asp535. Thr573 carries the phosphothreonine modification. Residue Ser732 is modified to Phosphoserine.

The protein belongs to the protein kinase superfamily. AGC Ser/Thr protein kinase family. S6 kinase subfamily. Forms a complex with either MAPK1/ERK2 or MAPK3/ERK1 in quiescent cells. Transiently dissociates following mitogenic stimulation. Interacts with ETV1/ER81 and FGFR1. The cofactor is Mg(2+). Activated by phosphorylation at Ser-221 by PDPK1. Autophosphorylated on Ser-380, as part of the activation process. May be phosphorylated at Thr-359 and Ser-363 by MAPK1/ERK2 and MAPK3/ERK1. Post-translationally, N-terminal myristoylation results in an activated kinase in the absence of added growth factors.

It is found in the nucleus. It localises to the cytoplasm. It carries out the reaction L-seryl-[protein] + ATP = O-phospho-L-seryl-[protein] + ADP + H(+). The catalysed reaction is L-threonyl-[protein] + ATP = O-phospho-L-threonyl-[protein] + ADP + H(+). Upon extracellular signal or mitogen stimulation, phosphorylated at Thr-573 in the C-terminal kinase domain (CTKD) by MAPK1/ERK2 and MAPK3/ERK1. The activated CTKD then autophosphorylates Ser-380, allowing binding of PDPK1, which in turn phosphorylates Ser-221 in the N-terminal kinase domain (NTDK) leading to the full activation of the protein and subsequent phosphorylation of the substrates by the NTKD. Functionally, serine/threonine-protein kinase that acts downstream of ERK (MAPK1/ERK2 and MAPK3/ERK1) signaling and mediates mitogenic and stress-induced activation of the transcription factors CREB1, ETV1/ER81 and NR4A1/NUR77, regulates translation through RPS6 and EIF4B phosphorylation, and mediates cellular proliferation, survival, and differentiation by modulating mTOR signaling and repressing pro-apoptotic function of BAD and DAPK1. In fibroblast, is required for EGF-stimulated phosphorylation of CREB1, which results in the subsequent transcriptional activation of several immediate-early genes. In response to mitogenic stimulation (EGF and PMA), phosphorylates and activates NR4A1/NUR77 and ETV1/ER81 transcription factors and the cofactor CREBBP. Upon insulin-derived signal, acts indirectly on the transcription regulation of several genes by phosphorylating GSK3B at 'Ser-9' and inhibiting its activity. Phosphorylates RPS6 in response to serum or EGF via an mTOR-independent mechanism and promotes translation initiation by facilitating assembly of the pre-initiation complex. In response to insulin, phosphorylates EIF4B, enhancing EIF4B affinity for the EIF3 complex and stimulating cap-dependent translation. Is involved in the mTOR nutrient-sensing pathway by directly phosphorylating TSC2 at 'Ser-1798', which potently inhibits TSC2 ability to suppress mTOR signaling, and mediates phosphorylation of RPTOR, which regulates mTORC1 activity and may promote rapamycin-sensitive signaling independently of the PI3K/AKT pathway. Also involved in feedback regulation of mTORC1 and mTORC2 by phosphorylating DEPTOR. Mediates cell survival by phosphorylating the pro-apoptotic proteins BAD and DAPK1 and suppressing their pro-apoptotic function. Promotes the survival of hepatic stellate cells by phosphorylating CEBPB in response to the hepatotoxin carbon tetrachloride (CCl4). Mediates induction of hepatocyte prolifration by TGFA through phosphorylation of CEBPB. Is involved in cell cycle regulation by phosphorylating the CDK inhibitor CDKN1B, which promotes CDKN1B association with 14-3-3 proteins and prevents its translocation to the nucleus and inhibition of G1 progression. Phosphorylates EPHA2 at 'Ser-897', the RPS6KA-EPHA2 signaling pathway controls cell migration. In response to mTORC1 activation, phosphorylates EIF4B at 'Ser-406' and 'Ser-422' which stimulates bicarbonate cotransporter SLC4A7 mRNA translation, increasing SLC4A7 protein abundance and function. The protein is Ribosomal protein S6 kinase alpha-1 (Rps6ka1) of Rattus norvegicus (Rat).